The primary structure comprises 1459 residues: ARF guanine-nucleotide exchange factor 2 (1459 aa).

Phosphoserine occurs at positions 46 and 284. The SEC7 domain maps to 570–714 (FNEKPKKGIP…IIMLNTDLHN (145 aa)). A disordered region spans residues 1412–1459 (EKGNGSSSHGSAHEQTPESNDVEIEATAPIDDNTDDDNKPKLSDVEKD). Positions 1447 to 1459 (DDNKPKLSDVEKD) are enriched in basic and acidic residues.

In terms of assembly, interacts (via SEC7 domain) with DRS2 (via C-terminus); the interaction is direct. Interacts with GMH1.

It localises to the cytoplasm. It is found in the cytosol. The protein localises to the membrane. The protein resides in the golgi apparatus membrane. Activates the ARF proteins by exchanging bound GDP for free GTP. Plays a role in maintaining mitochondrial morphology. Stimulates DRS2 flippase activity. This chain is ARF guanine-nucleotide exchange factor 2 (GEA2), found in Saccharomyces cerevisiae (strain ATCC 204508 / S288c) (Baker's yeast).